The chain runs to 97 residues: Protein SENESCENCE-ASSOCIATED GENE 21, mitochondrial (97 aa).

The N-terminal 46 residues, 1-46 (MARSISNVKIVSAFVSRELSNAIFRRGYAATAAQGSVSSGGRSGAV), are a transit peptide targeting the mitochondrion.

It belongs to the LEA type 3 family. In terms of tissue distribution, expressed in roots, stems leaves and flowers, but not in seeds. In short days, observed in cotyledons and roots but absent from rosette leaves.

It is found in the mitochondrion. In terms of biological role, mediates tolerance to oxidative stresses (e.g. hydrogen peroxide H(2)O(2), diamide, menadione and tert-butyl hydroperoxide) by minimizing the negative effects of oxidation and monitoring photosynthesis during stress. Promotes root development. Prevents premature aging (e.g. senescence and flowering). Involved in resistance against compatible pathogens such as Botrytis cinerea and Pseudomonas syringae pv. tomato. The sequence is that of Protein SENESCENCE-ASSOCIATED GENE 21, mitochondrial from Arabidopsis thaliana (Mouse-ear cress).